The primary structure comprises 483 residues: Keratin, type II cytoskeletal 8 (483 aa).

Residues 1–25 (MSVRVTQKSYKMSTSGPRAFSSRSF) are compositionally biased toward polar residues. Residues 1-43 (MSVRVTQKSYKMSTSGPRAFSSRSFTSGPGARISSSSFSRVGS) are disordered. Positions 1 to 90 (MSVRVTQKSY…DPNIQAVRTQ (90 aa)) are head. Ser9 is modified (phosphoserine; by PKC/PRKCE). Lys11 is covalently cross-linked (Glycyl lysine isopeptide (Lys-Gly) (interchain with G-Cter in SUMO2)). A phosphoserine mark is found at Ser13, Ser15, Ser21, and Ser22. Position 23 is an omega-N-methylarginine (Arg23). At Ser24 the chain carries Phosphoserine; by PKC/PRKCE. The residue at position 24 (Ser24) is a Phosphoserine. At Thr26 the chain carries Phosphothreonine. Low complexity predominate over residues 26 to 43 (TSGPGARISSSSFSRVGS). Ser27 is modified (phosphoserine). Arg32 is subject to Omega-N-methylarginine. Residues Ser34, Ser37, and Ser39 each carry the phosphoserine modification. An Omega-N-methylarginine modification is found at Arg40. A phosphoserine mark is found at Ser43, Ser44, and Ser47. Asymmetric dimethylarginine; alternate is present on Arg49. Arg49 bears the Omega-N-methylarginine; alternate mark. A Phosphoserine modification is found at Ser51. The tract at residues 91 to 126 (EKEQIKTLNNKFASFIDKVRFLEQQNKMLETKWSLL) is coil 1A. In terms of domain architecture, IF rod spans 91–402 (EKEQIKTLNN…KLLEGEESRL (312 aa)). Lys101 is modified (N6-malonyllysine). Glycyl lysine isopeptide (Lys-Gly) (interchain with G-Cter in SUMO2) cross-links involve residues Lys122 and Lys130. Residues 127–143 (QQQKTSRSNMDNMFESY) form a linker 1 region. A coil 1B region spans residues 144-235 (INNLRRQLEA…QIHEEEIREL (92 aa)). Lys197 is covalently cross-linked (Glycyl lysine isopeptide (Lys-Gly) (interchain with G-Cter in SUMO1); alternate). Lys197 participates in a covalent cross-link: Glycyl lysine isopeptide (Lys-Gly) (interchain with G-Cter in SUMO2); alternate. Lys207 is modified (N6-acetyllysine). Positions 236–259 (QSQISDTSVVLSMDNSRSLDMDSI) are linker 12. 3 positions are modified to phosphoserine: Ser253, Ser258, and Ser274. The segment at 260–398 (IAEVRAQYEE…ATYRKLLEGE (139 aa)) is coil 2. The segment at 261–382 (AEVRAQYEEI…EYQELMNVKL (122 aa)) is necessary for interaction with PNN. Residue Lys285 forms a Glycyl lysine isopeptide (Lys-Gly) (interchain with G-Cter in SUMO2) linkage. A Glycyl lysine isopeptide (Lys-Gly) (interchain with G-Cter in SUMO2); alternate cross-link involves residue Lys295. Position 295 is an N6-acetyllysine; alternate (Lys295). Lys304 is covalently cross-linked (Glycyl lysine isopeptide (Lys-Gly) (interchain with G-Cter in SUMO2)). Lys325 is covalently cross-linked (Glycyl lysine isopeptide (Lys-Gly) (interchain with G-Cter in SUMO2); alternate). The residue at position 325 (Lys325) is an N6-acetyllysine; alternate. Residue Lys393 forms a Glycyl lysine isopeptide (Lys-Gly) (interchain with G-Cter in SUMO2) linkage. Residues 399 to 483 (ESRLESGMQN…VSESSDIMSK (85 aa)) form a tail region. Ser400, Ser404, Ser410, Ser417, Ser424, Ser426, and Ser432 each carry phosphoserine. A Glycyl lysine isopeptide (Lys-Gly) (interchain with G-Cter in SUMO1); alternate cross-link involves residue Lys472. Lys472 participates in a covalent cross-link: Glycyl lysine isopeptide (Lys-Gly) (interchain with G-Cter in SUMO2); alternate. A phosphoserine mark is found at Ser475, Ser477, Ser478, and Ser482.

The protein belongs to the intermediate filament family. Heterotetramer of two type I and two type II keratins. Forms a heterodimer with KRT18. Associates with KRT20. Interacts with PNN. When associated with KRT19, interacts with DMD. Interacts with TCHP. Interacts with APEX1. Interacts with GPER1. Interacts with EPPK1. Interacts with PKP1 and PKP2. Post-translationally, O-glycosylated. O-GlcNAcylation at multiple sites increases solubility, and decreases stability by inducing proteasomal degradation. O-glycosylated (O-GlcNAcylated), in a cell cycle-dependent manner. In terms of tissue distribution, expressed in cardiac and striated muscle. Expressed at Z-lines within the muscle fibers and at Z-line and M-line domains at costameres at the sarcolemmal membrane (at protein level). Observed in coagulating gland, bladder, salivary gland, kidney, spleen, thymus, lung and heart. Also observed in ventral prostate, seminal vesicle and liver where expression increases following castration.

Its subcellular location is the cytoplasm. It is found in the nucleus. It localises to the nucleoplasm. The protein resides in the nucleus matrix. Functionally, together with KRT19, helps to link the contractile apparatus to dystrophin at the costameres of striated muscle. The sequence is that of Keratin, type II cytoskeletal 8 (Krt8) from Rattus norvegicus (Rat).